The chain runs to 236 residues: UPF0257 lipoprotein YnfC (236 aa).

An N-terminal signal peptide occupies residues 1–16 (MKKPLLLTLLCMILAG). C17 carries the N-palmitoyl cysteine lipid modification. C17 is lipidated: S-diacylglycerol cysteine.

It belongs to the UPF0257 family.

The protein resides in the cell membrane. The protein is UPF0257 lipoprotein YnfC of Salmonella dublin (strain CT_02021853).